A 98-amino-acid polypeptide reads, in one-letter code: Large ribosomal subunit protein eL14 (98 aa).

This sequence belongs to the eukaryotic ribosomal protein eL14 family.

The polypeptide is Large ribosomal subunit protein eL14 (Thermofilum pendens (strain DSM 2475 / Hrk 5)).